Here is a 1011-residue protein sequence, read N- to C-terminus: Protein FAM83B (1011 aa).

The segment at 1–283 is DUF1669; it reads METSSMLSSL…RTLYARSCVP (283 aa). The required for interaction with RAF1 and for the function stretch occupies residues 1 to 284; that stretch reads METSSMLSSL…TLYARSCVPS (284 aa). Serine 334, serine 422, serine 424, serine 466, and serine 543 each carry phosphoserine. Residues 555–585 form a disordered region; the sequence is EVNSCTTGSSNSTIIGSQGSETPKEVPDTPT. A compositionally biased stretch (low complexity) spans 557–574; sequence NSCTTGSSNSTIIGSQGS. A Phosphoserine modification is found at serine 664. 2 disordered regions span residues 691-738 and 750-769; these read NRVR…TKSV and ESNK…SFLK. The segment covering 694-705 has biased composition (basic and acidic residues); it reads RQPEKPKEDLLK. 2 stretches are compositionally biased toward polar residues: residues 706-715 and 727-738; these read SSKSMHNVTH and RNSPSGTTTKSV. The segment covering 750–762 has biased composition (basic and acidic residues); the sequence is ESNKELASKKEVK. Threonine 782 is modified (phosphothreonine). The residue at position 802 (serine 802) is a Phosphoserine. The tract at residues 807–928 is disordered; sequence LVSEGEENQK…TSSELLRSHS (122 aa). The span at 813–828 shows a compositional bias: basic and acidic residues; sequence ENQKPKKSDTKVDSSP. Phosphoserine is present on residues serine 852, serine 869, and serine 915. Residues 913–923 are compositionally biased toward low complexity; it reads TSSPRPTSSEL.

This sequence belongs to the FAM83 family. Interacts with EGFR; positively regulates EGFR inducing its autophosphorylation in absence of stimulation by EGF. Interacts with RAF1; displaces 14-3-3 proteins from RAF1 and activates RAF1 within the RAS/MAPK signaling cascade. Interacts with AKT1, PIK3CA and PIK3R1; activates the PI3K/AKT signaling cascade. Directly interacts (via DUF1669) with casein kinase isoforms CSNK1A1, CSNK1A1L, CSNK1D and CSNK1E. Post-translationally, phosphorylated in vitro by CSNK1A1.

It is found in the cytoplasm. Its subcellular location is the membrane. Probable proto-oncogene that functions in the epidermal growth factor receptor/EGFR signaling pathway. Activates both the EGFR itself and downstream RAS/MAPK and PI3K/AKT/TOR signaling cascades. The polypeptide is Protein FAM83B (Homo sapiens (Human)).